A 221-amino-acid polypeptide reads, in one-letter code: MDTLDELLPREKMLRSGIASLSDVELLALFLRTGTPGKDVMTLAKEILQHFGSLYGLLSADFAQFRGVNGIGLAKFAQLKGIAELARRYYSVRMNEESALLSPEMTREFLQSQLTCEEREIFLVIFLDAQHRVLQHSRLFSGTLNHVEVHPREIVREAIKLNASAVILAHNHPSGCAEPSKADKLITERVIKCCQFMDIRVLDHLIIGRGEYVSFAERGWI.

The 123-residue stretch at 99–221 folds into the MPN domain; it reads ALLSPEMTRE…YVSFAERGWI (123 aa). Residues His-170, His-172, and Asp-183 each coordinate Zn(2+). Residues 170–183 carry the JAMM motif motif; the sequence is HNHPSGCAEPSKAD.

It belongs to the UPF0758 family. YicR subfamily.

The chain is UPF0758 protein YicR from Salmonella newport (strain SL254).